We begin with the raw amino-acid sequence, 526 residues long: Lysine--tRNA ligase (526 aa).

The short motif at 30-38 (PSGYVHIGN) is the 'HIGH' region element. Zn(2+)-binding residues include aspartate 95, cysteine 99, histidine 100, histidine 106, cysteine 177, and cysteine 199. Residues 280-284 (KMSGS) carry the 'KMSKS' region motif.

Belongs to the class-I aminoacyl-tRNA synthetase family. Requires Zn(2+) as cofactor.

It localises to the cytoplasm. It carries out the reaction tRNA(Lys) + L-lysine + ATP = L-lysyl-tRNA(Lys) + AMP + diphosphate. This chain is Lysine--tRNA ligase (lysS), found in Thermococcus kodakarensis (strain ATCC BAA-918 / JCM 12380 / KOD1) (Pyrococcus kodakaraensis (strain KOD1)).